Consider the following 327-residue polypeptide: Probable cell division protein WhiA (327 aa).

The segment at residues Ser275 to Glu308 is a DNA-binding region (H-T-H motif).

It belongs to the WhiA family.

Functionally, involved in cell division and chromosome segregation. This chain is Probable cell division protein WhiA, found in Corynebacterium glutamicum (strain R).